The chain runs to 185 residues: Ribosome-recycling factor (185 aa).

The protein belongs to the RRF family.

Its subcellular location is the cytoplasm. Responsible for the release of ribosomes from messenger RNA at the termination of protein biosynthesis. May increase the efficiency of translation by recycling ribosomes from one round of translation to another. This is Ribosome-recycling factor from Coxiella burnetii (strain RSA 493 / Nine Mile phase I).